The chain runs to 108 residues: Glutaredoxin-1 (108 aa).

One can recognise a Glutaredoxin domain in the interval 3–106 (EEFVQQRLAN…DILSSIGVLR (104 aa)). A disulfide bridge connects residues Cys-23 and Cys-26.

This sequence belongs to the glutaredoxin family.

It is found in the virion. Its function is as follows. Has thioltransferase and dehydroascorbate reductase activities. This is Glutaredoxin-1 (OPG075) from Cowpox virus (strain GRI-90 / Grishak) (CPV).